Consider the following 401-residue polypeptide: 1-deoxy-D-xylulose 5-phosphate reductoisomerase (401 aa).

NADPH-binding residues include threonine 11, glycine 12, serine 13, isoleucine 14, arginine 38, asparagine 39, and asparagine 125. Residue lysine 126 participates in 1-deoxy-D-xylulose 5-phosphate binding. Glutamate 127 serves as a coordination point for NADPH. Aspartate 151 is a binding site for Mn(2+). The 1-deoxy-D-xylulose 5-phosphate site is built by serine 152, glutamate 153, serine 179, and histidine 202. Glutamate 153 is a binding site for Mn(2+). Glycine 208 lines the NADPH pocket. The 1-deoxy-D-xylulose 5-phosphate site is built by serine 215, asparagine 220, lysine 221, and glutamate 224. Glutamate 224 contacts Mn(2+).

The protein belongs to the DXR family. The cofactor is Mg(2+). Requires Mn(2+) as cofactor.

The enzyme catalyses 2-C-methyl-D-erythritol 4-phosphate + NADP(+) = 1-deoxy-D-xylulose 5-phosphate + NADPH + H(+). The protein operates within isoprenoid biosynthesis; isopentenyl diphosphate biosynthesis via DXP pathway; isopentenyl diphosphate from 1-deoxy-D-xylulose 5-phosphate: step 1/6. Functionally, catalyzes the NADPH-dependent rearrangement and reduction of 1-deoxy-D-xylulose-5-phosphate (DXP) to 2-C-methyl-D-erythritol 4-phosphate (MEP). The chain is 1-deoxy-D-xylulose 5-phosphate reductoisomerase from Paraburkholderia xenovorans (strain LB400).